A 445-amino-acid chain; its full sequence is UPF0210 protein llmg_1581 (445 aa).

It belongs to the UPF0210 family. Homodimer.

This chain is UPF0210 protein llmg_1581, found in Lactococcus lactis subsp. cremoris (strain MG1363).